A 469-amino-acid chain; its full sequence is Exodeoxyribonuclease 7 large subunit (469 aa).

It belongs to the XseA family. Heterooligomer composed of large and small subunits.

It is found in the cytoplasm. It carries out the reaction Exonucleolytic cleavage in either 5'- to 3'- or 3'- to 5'-direction to yield nucleoside 5'-phosphates.. Its function is as follows. Bidirectionally degrades single-stranded DNA into large acid-insoluble oligonucleotides, which are then degraded further into small acid-soluble oligonucleotides. The chain is Exodeoxyribonuclease 7 large subunit from Mycoplasma mycoides subsp. mycoides SC (strain CCUG 32753 / NCTC 10114 / PG1).